The following is a 1077-amino-acid chain: MVPYFEMAAASNFSFLCGASHPQELVERAHALDLSGIGIADRNTLAGVVRAHAQWKDIRKESGFRLFIGCRLSFIDGTPDMVVYPRDRAAYGQLCRLLTEGKHRAAIKGECHLEWADLLFRARQFQIAVFPPDEDEPDFAARLTEIAQAAPGSVWLALTMPHQGQDGRRAERIARFAAQAGVPLIATNDVLYHHPDRRPLQDVLTATRHHTTVFAAGRLLEKNAERHLKPPHEMVRLFRDYPEAIAATADFVAPITFQLDELKYAYPDEPIPPGKTAQQHLYDLVWEGAARHYGADMIPPKVQGLINKELALIARLEYEPYFLTVYDIVTHAREKGILCQGRGSAANSVVCFCLGITGVNPTQVDLLFERFISAERKEPPDIDVDFEHERREEVMQYVYDRYSRDRAAIVATVISYRSRSAIRDVGKALGLSEDVTAALANTVWGLSGGGIDRQHIRQAGLDPDNPIIQRAVELAITLIGFPRHLSQHVGGFVLTRDRLDETVPIGPAAMDKRSFIEWDKDDIDEVGLMKVDVLSLGMLTCIRKAFDLIHQHKPQLYGGEKLTLASLPRKDKAVYDMLCKGDSLGVFQVESRAQMNMLPRLRPQEFYDLVIEVAIVRPGPIQGDMVHPYLRRRSGQEPCTLPSPSPQHGPANELQQILGKTKGVPLFQEQAMRIAMEAAKFTPEEANQLRRAMATFRKMGTIHTMEKKMIDGMVNRGYDRTFAENCFNQIKGFGEYGFPESHAASFAHLVYISAWLKCHHPEVFAAALLNSQPMGFYAPAQIVRDAREHGVTVLPVDVNFSQWDNILEETPDVHLALRLGFRQIDGFSKRDTELLIADRQEPYRTIEDMHRRLRLDRRAFTLLADADAFGSLDIDRRAALWAVRRLPNDETLPLFRAAAASELAQEPRTKLPEMAASEHVIADYETTRLSLKGHPLQYLREGLAAEGVSTCRAVQEGADGRRMKVAGVVTVRQRPGSAKGVVFLTIEDETGIANIVIWPKIMKVFRREVMSARLIHIEGRIQRSLEGVVHLVAAKLQDRSAALIEMSGREAQRLIAPSQMAHHPRNVRVMPNSRDFH.

It belongs to the DNA polymerase type-C family. DnaE2 subfamily.

Its subcellular location is the cytoplasm. The enzyme catalyses DNA(n) + a 2'-deoxyribonucleoside 5'-triphosphate = DNA(n+1) + diphosphate. In terms of biological role, DNA polymerase involved in damage-induced mutagenesis and translesion synthesis (TLS). It is not the major replicative DNA polymerase. This chain is Error-prone DNA polymerase, found in Brucella abortus biovar 1 (strain 9-941).